The primary structure comprises 167 residues: MSQRPNPSALIWLLLSAVVIGLDQWSKAWVLSSLPEYTPVPVIDGFWNWYRTYNTGAAFSFLSDAGGWQLWFFTALAVGISGLLAFWLSRTARGDWRSAVPYALVIGGAIGNVIDRLMHGHVVDFIQWYVGEHTWPSFNIADSAIVGGAIGIALFGLFDGKRSRKAG.

3 helical membrane passes run 10 to 30 (LIWL…KAWV), 68 to 88 (WQLW…AFWL), and 98 to 118 (SAVP…DRLM). Residues Asp124 and Asp142 contribute to the active site. A helical transmembrane segment spans residues 138 to 158 (FNIADSAIVGGAIGIALFGLF).

The protein belongs to the peptidase A8 family.

It localises to the cell inner membrane. The catalysed reaction is Release of signal peptides from bacterial membrane prolipoproteins. Hydrolyzes -Xaa-Yaa-Zaa-|-(S,diacylglyceryl)Cys-, in which Xaa is hydrophobic (preferably Leu), and Yaa (Ala or Ser) and Zaa (Gly or Ala) have small, neutral side chains.. The protein operates within protein modification; lipoprotein biosynthesis (signal peptide cleavage). In terms of biological role, this protein specifically catalyzes the removal of signal peptides from prolipoproteins. The sequence is that of Lipoprotein signal peptidase from Xanthomonas campestris pv. campestris (strain 8004).